The sequence spans 130 residues: MAQVQYYGTGRRKKSTARVRLVPGTGNVTINGRDAQDYFPYETQLLILNQPLAATETQGTYDVLVNVDGGGFTGQAGAIRHGIARALLQADPEYRSTLKSEGYLTRDARMKERKKYGLKKARRAPQFSKR.

This sequence belongs to the universal ribosomal protein uS9 family.

The chain is Small ribosomal subunit protein uS9 from Oceanobacillus iheyensis (strain DSM 14371 / CIP 107618 / JCM 11309 / KCTC 3954 / HTE831).